The chain runs to 287 residues: Very long chain fatty acid elongase 4 (287 aa).

3 helical membrane passes run 33 to 53 (ILVY…EHIM), 64 to 84 (PFVV…YSCV), and 115 to 135 (FWVF…VFLV). The short motif at 145–149 (HWYHH) is the HxxHH motif element. Residue histidine 148 is the Nucleophile of the active site. 4 consecutive transmembrane segments (helical) span residues 150 to 170 (LTVA…GLWF), 172 to 192 (TMNY…ACGM), 199 to 219 (IAPF…LIVL), and 241 to 261 (LGLV…GKLY).

The protein belongs to the ELO family.

It is found in the membrane. It carries out the reaction a very-long-chain acyl-CoA + malonyl-CoA + H(+) = a very-long-chain 3-oxoacyl-CoA + CO2 + CoA. Involved in the synthesis of fatty acids. Elongates C16:0 and C18:0 fatty acids to C26:0, with C24:0 being the main product. The chain is Very long chain fatty acid elongase 4 from Trypanosoma cruzi (strain CL Brener).